Here is a 325-residue protein sequence, read N- to C-terminus: MSDGDGGGEQGGGGPAEAEESALVLGRLLDRGAWRLKVAGVEKPRRDARLLAGHVLGLSPGAVLLADDRVVTPEEAQALEAVIARRETREPVSRILGHRGFWRFDLALGADTLDPRPDTETLVEAGLAVLEGCGGRILDLGTGSGCILLALLADRPGAIGLGIDIAPGAVRVALRNARALGLERRALFAVGDWAAAVAGPFDLIVSNPPYIPSADIAALEPEVARFDPSRALDGGADGLDPYRILAAQVPALLAPAGVLAVEFGQGQARDVAGLLEVGGLCPYEIKKDLSGEERCLLARRRAAGPLPPIHIDAKPSAPGNGPTKA.

S-adenosyl-L-methionine-binding positions include 141–145 (GTGSG), Asp164, Trp193, and Asn207. A substrate-binding site is contributed by 207-210 (NPPY). The tract at residues 306-325 (LPPIHIDAKPSAPGNGPTKA) is disordered.

Belongs to the protein N5-glutamine methyltransferase family. PrmC subfamily.

It catalyses the reaction L-glutaminyl-[peptide chain release factor] + S-adenosyl-L-methionine = N(5)-methyl-L-glutaminyl-[peptide chain release factor] + S-adenosyl-L-homocysteine + H(+). In terms of biological role, methylates the class 1 translation termination release factors RF1/PrfA and RF2/PrfB on the glutamine residue of the universally conserved GGQ motif. The protein is Release factor glutamine methyltransferase of Rhodospirillum rubrum (strain ATCC 11170 / ATH 1.1.1 / DSM 467 / LMG 4362 / NCIMB 8255 / S1).